We begin with the raw amino-acid sequence, 92 residues long: C-C motif chemokine 4-like (92 aa).

The first 23 residues, 1 to 23 (MKLCVTVLSLLVLVAAFCSLALS), serve as a signal peptide directing secretion. 2 disulfides stabilise this stretch: C34/C58 and C35/C74.

This sequence belongs to the intercrine beta (chemokine CC) family. Interacts with CCR5. As to expression, detected in B-cells.

It is found in the secreted. Its function is as follows. Chemokine that induces chemotaxis of cells expressing CCR5 or CCR1. Inhibits HIV replication in peripheral blood monocytes that express CCR5. This is C-C motif chemokine 4-like (CCL4L1) from Homo sapiens (Human).